The sequence spans 30 residues: Dermaseptin-DI4 (30 aa).

In terms of tissue distribution, expressed by the skin glands.

Its subcellular location is the secreted. Antibacterial activity against Gram-positive bacteria S.aureus and E.faecalis, and Gram-negative bacteria P.aeruginosa and E.coli. This Phyllomedusa distincta (Monkey frog) protein is Dermaseptin-DI4.